Here is a 107-residue protein sequence, read N- to C-terminus: Nucleoid-associated protein mlr5504 (107 aa).

It belongs to the YbaB/EbfC family. In terms of assembly, homodimer.

Its subcellular location is the cytoplasm. It localises to the nucleoid. In terms of biological role, binds to DNA and alters its conformation. May be involved in regulation of gene expression, nucleoid organization and DNA protection. This is Nucleoid-associated protein mlr5504 from Mesorhizobium japonicum (strain LMG 29417 / CECT 9101 / MAFF 303099) (Mesorhizobium loti (strain MAFF 303099)).